An 896-amino-acid polypeptide reads, in one-letter code: Translation initiation factor IF-2 (896 aa).

Disordered regions lie at residues L32–P99 and E117–E304. Polar residues predominate over residues A35–A48. Over residues T153–P169 the composition is skewed to basic and acidic residues. A compositionally biased stretch (low complexity) spans A203–P214. The segment covering R215 to Q227 has biased composition (polar residues). The span at P228–S241 shows a compositional bias: low complexity. Residues R256–G280 are compositionally biased toward basic and acidic residues. One can recognise a tr-type G domain in the interval I401–K570. The interval G410 to T417 is G1. GTP is bound at residue G410–T417. The interval A435–H439 is G2. The segment at D456 to G459 is G3. Residues D456–H460 and N510–D513 contribute to the GTP site. The G4 stretch occupies residues N510–D513. The segment at S546 to K548 is G5.

The protein belongs to the TRAFAC class translation factor GTPase superfamily. Classic translation factor GTPase family. IF-2 subfamily.

It is found in the cytoplasm. Functionally, one of the essential components for the initiation of protein synthesis. Protects formylmethionyl-tRNA from spontaneous hydrolysis and promotes its binding to the 30S ribosomal subunits. Also involved in the hydrolysis of GTP during the formation of the 70S ribosomal complex. The sequence is that of Translation initiation factor IF-2 from Chlamydia trachomatis serovar L2 (strain ATCC VR-902B / DSM 19102 / 434/Bu).